The primary structure comprises 565 residues: Adenine deaminase (565 aa).

This sequence belongs to the metallo-dependent hydrolases superfamily. Adenine deaminase family. It depends on Mn(2+) as a cofactor.

The enzyme catalyses adenine + H2O + H(+) = hypoxanthine + NH4(+). This is Adenine deaminase from Methylobacterium nodulans (strain LMG 21967 / CNCM I-2342 / ORS 2060).